A 218-amino-acid polypeptide reads, in one-letter code: Octanoyltransferase (218 aa).

A BPL/LPL catalytic domain is found at 32-218; sequence GEAAEAIWLL…LRTFPQHFPD (187 aa). Substrate is bound by residues 71–78, 151–153, and 164–166; these read RGGQYTYH, AIG, and GLS. Residue cysteine 182 is the Acyl-thioester intermediate of the active site.

Belongs to the LipB family.

The protein localises to the cytoplasm. The enzyme catalyses octanoyl-[ACP] + L-lysyl-[protein] = N(6)-octanoyl-L-lysyl-[protein] + holo-[ACP] + H(+). Its pathway is protein modification; protein lipoylation via endogenous pathway; protein N(6)-(lipoyl)lysine from octanoyl-[acyl-carrier-protein]: step 1/2. Its function is as follows. Catalyzes the transfer of endogenously produced octanoic acid from octanoyl-acyl-carrier-protein onto the lipoyl domains of lipoate-dependent enzymes. Lipoyl-ACP can also act as a substrate although octanoyl-ACP is likely to be the physiological substrate. This Cereibacter sphaeroides (strain ATCC 17029 / ATH 2.4.9) (Rhodobacter sphaeroides) protein is Octanoyltransferase.